We begin with the raw amino-acid sequence, 363 residues long: UDP-N-acetylglucosamine--N-acetylmuramyl-(pentapeptide) pyrophosphoryl-undecaprenol N-acetylglucosamine transferase (363 aa).

UDP-N-acetyl-alpha-D-glucosamine contacts are provided by residues 21–23 (TGG), N129, R170, S196, and Q290.

Belongs to the glycosyltransferase 28 family. MurG subfamily.

The protein resides in the cell inner membrane. The enzyme catalyses di-trans,octa-cis-undecaprenyl diphospho-N-acetyl-alpha-D-muramoyl-L-alanyl-D-glutamyl-meso-2,6-diaminopimeloyl-D-alanyl-D-alanine + UDP-N-acetyl-alpha-D-glucosamine = di-trans,octa-cis-undecaprenyl diphospho-[N-acetyl-alpha-D-glucosaminyl-(1-&gt;4)]-N-acetyl-alpha-D-muramoyl-L-alanyl-D-glutamyl-meso-2,6-diaminopimeloyl-D-alanyl-D-alanine + UDP + H(+). It participates in cell wall biogenesis; peptidoglycan biosynthesis. Its function is as follows. Cell wall formation. Catalyzes the transfer of a GlcNAc subunit on undecaprenyl-pyrophosphoryl-MurNAc-pentapeptide (lipid intermediate I) to form undecaprenyl-pyrophosphoryl-MurNAc-(pentapeptide)GlcNAc (lipid intermediate II). The protein is UDP-N-acetylglucosamine--N-acetylmuramyl-(pentapeptide) pyrophosphoryl-undecaprenol N-acetylglucosamine transferase of Synechococcus sp. (strain ATCC 27144 / PCC 6301 / SAUG 1402/1) (Anacystis nidulans).